A 350-amino-acid chain; its full sequence is MRPIKLMGHERSLTQVKYNREGDLLFSVAKDNAASIWYSSNGERLGTLEGHQGVIWSIDVDPETLLCATGGGDLAVKLWTVENGQCVYTWNSPSPVRRVSFSPDGKKLLVIADQVMGHIGTISVYDINRDTASLTNQAETASLVIETEQNGSKATVAGWSEDGRFIIAGHDNGYVSKYDAHTGELLKSLQAHGIHNEEKNVSVTDIQFAPEDRSYFITSSKDKCAVLTDVDTFEILKVYKADAPMNTAAITPLKDFVILGGGQEARNVTTTAESQGKFEARFYHKIFEEEIGRVKGHFGPLNTVAVHPDGTGYSSGGEDGFIRVHTFDKSYKDFLFDAERTEKAAAAGLD.

WD repeat units follow at residues 8–49, 51–89, 91–135, 149–190, 198–240, and 296–335; these read GHER…GTLE, HQGV…CVYT, NSPS…ASLT, QNGS…KSLQ, EKNV…KVYK, and GHFG…KDFL.

This sequence belongs to the eIF-3 subunit I family. In terms of assembly, component of the eukaryotic translation initiation factor 3 (eIF-3) complex.

It localises to the cytoplasm. Component of the eukaryotic translation initiation factor 3 (eIF-3) complex, which is involved in protein synthesis of a specialized repertoire of mRNAs and, together with other initiation factors, stimulates binding of mRNA and methionyl-tRNAi to the 40S ribosome. The eIF-3 complex specifically targets and initiates translation of a subset of mRNAs involved in cell proliferation. This chain is Eukaryotic translation initiation factor 3 subunit I, found in Lodderomyces elongisporus (strain ATCC 11503 / CBS 2605 / JCM 1781 / NBRC 1676 / NRRL YB-4239) (Yeast).